A 73-amino-acid chain; its full sequence is Large ribosomal subunit protein uL24 (73 aa).

Residues 53-65 (NPKGGFIKKEKPM) are compositionally biased toward basic and acidic residues. The interval 53 to 73 (NPKGGFIKKEKPMHISNVKKA) is disordered.

The protein belongs to the universal ribosomal protein uL24 family. As to quaternary structure, part of the 50S ribosomal subunit.

In terms of biological role, one of two assembly initiator proteins, it binds directly to the 5'-end of the 23S rRNA, where it nucleates assembly of the 50S subunit. Functionally, one of the proteins that surrounds the polypeptide exit tunnel on the outside of the subunit. This is Large ribosomal subunit protein uL24 from Helicobacter pylori (strain J99 / ATCC 700824) (Campylobacter pylori J99).